Here is a 537-residue protein sequence, read N- to C-terminus: Leucine-rich repeat LGI family member 4 (537 aa).

The N-terminal stretch at 1–19 (MGGAGILLFLLAWAGAGVA) is a signal peptide. 4 LRR repeats span residues 53–74 (TLLSLSLVRMGVSRLKAGSFLK), 77–98 (SLHLLLFTSNTFSVIEGDAFIG), 101–122 (YLQYLFIEDNKIGSISKNALRG), and 125–146 (SLTHLSLANNHLEALPRFLFRG). The LRRCT domain maps to 158-208 (NPFQCDCRVLWLLQWMPTVNASVGTGACAGPPAVAQIQLNHLDPKKFKCRA). N-linked (GlcNAc...) asparagine glycosylation occurs at Asn177. EAR repeat units lie at residues 210-252 (ELSW…VWDY), 256-298 (RFRP…SRSS), 302-349 (RLTP…CRDG), 351-394 (GFYP…HWVG), 396-439 (RFER…RWDG), 441-483 (MFRL…RFES), and 487-532 (ILEP…QHHE).

Can bind to ADAM11, ADAM22 and ADAM23. As to expression, brain. Expressed in the entire developing peripheral nerves. Strongly expressed in the trigeminal nerve and ganglion and particularly abundant in the boundary cap cells - a transient population of cells that contributes to the Schwann cell population of the dorsal root nerve.

It is found in the secreted. Its function is as follows. Component of Schwann cell signaling pathway(s) that controls axon segregation and myelin formation. This Mus musculus (Mouse) protein is Leucine-rich repeat LGI family member 4 (Lgi4).